Here is a 747-residue protein sequence, read N- to C-terminus: Cyclic di-GMP phosphodiesterase PdeF (747 aa).

At 1–14 (MKLNATYIKIRDKW) the chain is on the periplasmic side. A helical transmembrane segment spans residues 15-36 (WGLPLFLPSLILPIFAHINTFA). Over 37–42 (HISSGE) the chain is Cytoplasmic. The helical transmembrane segment at 43–65 (VFLFYLPLALMISMMMFFSWAAL) threads the bilayer. Topologically, residues 66–79 (PGIALGIFVRKYAE) are periplasmic. A helical membrane pass occupies residues 80–102 (LGFYETLSLTANFIIIIILCWGG). Residues 103-128 (YRVFTPRRNNVSHGDTRLISQRIFWQ) are Cytoplasmic-facing. The helical transmembrane segment at 129 to 151 (IVFPATLFLILFQFAAFVGLLAS) threads the bilayer. Residues 152-165 (RENLVGVMPFNLGT) lie on the Periplasmic side of the membrane. Residues 166 to 188 (LINYQALLVGNLIGVPLCYFIIR) traverse the membrane as a helical segment. Residues 189-215 (VVRNPFYLRSYYSQLKQQVDAKVTKKE) lie on the Cytoplasmic side of the membrane. A helical membrane pass occupies residues 216–235 (FALWLLALGALLLLLCMPLN). Residues 236–239 (EKST) are Periplasmic-facing. Residues 240–259 (IFSTNYTLSLLLPLMMWGAM) form a helical membrane-spanning segment. Over 260 to 265 (RYGYKL) the chain is Cytoplasmic. Residues 266 to 285 (ISLLWAVVLMISIHSYQNYI) traverse the membrane as a helical segment. At 286–294 (PIYPGYTTQ) the chain is on the periplasmic side. A helical membrane pass occupies residues 295–317 (LTITSSSYLVFSFIVNYMAVLAT). The Cytoplasmic portion of the chain corresponds to 318 to 747 (RQRAVVRRIQ…NEIEPIRESA (430 aa)). Residues 493-744 (KVAMMNRLQQ…DTLNEIEPIR (252 aa)) form the EAL domain.

Mg(2+) is required as a cofactor. The cofactor is Mn(2+).

It localises to the cell inner membrane. The enzyme catalyses 3',3'-c-di-GMP + H2O = 5'-phosphoguanylyl(3'-&gt;5')guanosine + H(+). Its activity is regulated as follows. Inhibited by pGpG. In terms of biological role, phosphodiesterase (PDE) that catalyzes the hydrolysis of cyclic-di-GMP (c-di-GMP) to 5'-pGpG. Truncated proteins consisting of the GGDEF/EAL domains (residues 319-747) or of the EAL domain alone (481-747) have c-di-GMP phosphodiesterase activity. They do not have diguanylate cyclase activity. Cyclic-di-GMP is a second messenger which controls cell surface-associated traits in bacteria. The chain is Cyclic di-GMP phosphodiesterase PdeF from Escherichia coli (strain K12).